We begin with the raw amino-acid sequence, 333 residues long: Taste receptor type 2 member 110 (333 aa).

The Extracellular portion of the chain corresponds to 1–13; the sequence is MFSQIISTSDIFT. Residues 14–34 traverse the membrane as a helical segment; the sequence is FTIILFVELVIGILGNGFIAL. Residues 35–60 are Cytoplasmic-facing; it reads VNIMDWTKRRSISSADQILTALAITR. The chain crosses the membrane as a helical span at residues 61-81; the sequence is FLYVWFMIICILLFMLCPHLL. The Extracellular segment spans residues 82–89; it reads TRSEIVTS. The helical transmembrane segment at 90–110 threads the bilayer; the sequence is IGIIWIVNNHFSVWLATCLGV. Residues 111–133 are Cytoplasmic-facing; it reads FYFLKIANFSNSLFLYLKWRVKK. A helical transmembrane segment spans residues 134-154; it reads VVLMIIQVSMIFLILNLLSLS. Topologically, residues 155-205 are extracellular; that stretch reads MYDQFSIDVYEGNTSYNLGDSTPFPTISLFINSSKVFVITNSSHIFLPINS. Residues Asn186 and Asn195 are each glycosylated (N-linked (GlcNAc...) asparagine). Residues 206–226 traverse the membrane as a helical segment; the sequence is LFMLIPFTVSLVAFLMLIFSL. The Cytoplasmic segment spans residues 227–255; that stretch reads WKHHKKMQVNAKPPRDASTMAHIKALQTG. The helical transmembrane segment at 256-276 threads the bilayer; it reads FSFLLLYAVYLLFIVIGMLSL. Topologically, residues 277 to 283 are extracellular; that stretch reads RLIGGKL. A helical transmembrane segment spans residues 284–304; the sequence is ILLFDHISGIGFPISHSFVLI. Over 305 to 333 the chain is Cytoplasmic; sequence LGNNKLRQASLSVLHCLRCRSKDMDTMGP.

This sequence belongs to the G-protein coupled receptor T2R family.

The protein localises to the membrane. Gustducin-coupled receptor implicated in the perception of bitter compounds in the oral cavity and the gastrointestinal tract. Signals through PLCB2 and the calcium-regulated cation channel TRPM5. The chain is Taste receptor type 2 member 110 from Mus musculus (Mouse).